Consider the following 348-residue polypeptide: Tetraacyldisaccharide 4'-kinase (348 aa).

Residue 54–61 (TVGGAGKT) participates in ATP binding.

The protein belongs to the LpxK family.

It catalyses the reaction a lipid A disaccharide + ATP = a lipid IVA + ADP + H(+). The protein operates within glycolipid biosynthesis; lipid IV(A) biosynthesis; lipid IV(A) from (3R)-3-hydroxytetradecanoyl-[acyl-carrier-protein] and UDP-N-acetyl-alpha-D-glucosamine: step 6/6. Transfers the gamma-phosphate of ATP to the 4'-position of a tetraacyldisaccharide 1-phosphate intermediate (termed DS-1-P) to form tetraacyldisaccharide 1,4'-bis-phosphate (lipid IVA). The sequence is that of Tetraacyldisaccharide 4'-kinase from Agrobacterium fabrum (strain C58 / ATCC 33970) (Agrobacterium tumefaciens (strain C58)).